We begin with the raw amino-acid sequence, 302 residues long: NAD kinase 1 (302 aa).

The active-site Proton acceptor is Asp-67. NAD(+)-binding positions include 67-68 (DG), Arg-72, 148-149 (ND), Lys-178, and Asp-180.

It belongs to the NAD kinase family. It depends on a divalent metal cation as a cofactor.

It localises to the cytoplasm. It catalyses the reaction NAD(+) + ATP = ADP + NADP(+) + H(+). Its function is as follows. Involved in the regulation of the intracellular balance of NAD and NADP, and is a key enzyme in the biosynthesis of NADP. Catalyzes specifically the phosphorylation on 2'-hydroxyl of the adenosine moiety of NAD to yield NADP. This is NAD kinase 1 from Prochlorococcus marinus (strain NATL2A).